The chain runs to 180 residues: Signal peptidase complex subunit 3 (180 aa).

Topologically, residues 1-12 (MHNLLSRANALL) are cytoplasmic. The chain crosses the membrane as a helical; Signal-anchor for type II membrane protein span at residues 13–33 (AFTLWVMAAVTAACFLSTVFL). Residues 34 to 180 (DYTVPTKLTV…PTTYTTTRRS (147 aa)) are Lumenal-facing. A glycan (N-linked (GlcNAc...) asparagine) is linked at Asn141.

Belongs to the SPCS3 family. Component of the signal peptidase complex (SPC) composed of a catalytic subunit sec-11 and three accessory subunits spcs-1, spcs-2 and spcs-3. The complex induces a local thinning of the ER membrane which is used to measure the length of the signal peptide (SP) h-region of protein substrates. This ensures the selectivity of the complex towards h-regions shorter than 18-20 amino acids.

It localises to the endoplasmic reticulum membrane. Its function is as follows. Essential component of the signal peptidase complex (SPC) which catalyzes the cleavage of N-terminal signal sequences from nascent proteins as they are translocated into the lumen of the endoplasmic reticulum. Essential for the SPC catalytic activity, possibly by stabilizing and positioning the active center of the complex close to the lumenal surface. The protein is Signal peptidase complex subunit 3 of Caenorhabditis elegans.